The following is a 419-amino-acid chain: MKRVLSNVLKAWIFTIVAFHNFSTSVTADAPVNAAEYNALCRLYNIARAGEGLKEEDWLPCAGKAACEKTAASIEDVFMKLNFSEPSAVVTTLDGTRVELQNSASTRIKRAKLAKVLAAAETIKAQQLKYHESSKSLLESAKANFTKAIVGGWGNPTTPDESGLPTTFKTNRADDCKLAGGNGGKSLVFDIACLCTTSDSASGSKYTCGPKSGDNGSGWLDNNGDNQGKPAAKEAWKNLRADCRRQSAGVRVTPELISQSLVIFEGLIGTRAASGHDNARYIFGTVATAQSCGHSTATNKGSIDYKASNAQQRGDIEWEKNLRMAEGDLRGLLTAKQLVAALQARAEHLEDAAFTIFNESVLETQIAWESSRPPSTDANTSQKGPLQRPEKSGESSHLPSGSSHGTKAIRSILHVALLM.

The signal sequence occupies residues 1–28 (MKRVLSNVLKAWIFTIVAFHNFSTSVTA). N-linked (GlcNAc...) asparagine glycosylation is found at Asn82 and Asn358. Residues 369-405 (ESSRPPSTDANTSQKGPLQRPEKSGESSHLPSGSSHG) are disordered. Residues 372–384 (RPPSTDANTSQKG) show a composition bias toward polar residues. N-linked (GlcNAc...) (high mannose) asparagine glycosylation is present at Asn379. The span at 395 to 405 (SSHLPSGSSHG) shows a compositional bias: low complexity. Ser400 carries the GPI-anchor amidated serine lipid modification. The propeptide at 401 to 419 (GSSHGTKAIRSILHVALLM) is removed in mature form.

Its subcellular location is the cell membrane. Functionally, VSG forms a coat on the surface of the parasite. The trypanosome evades the immune response of the host by expressing a series of antigenically distinct VSGs from an estimated 1000 VSG genes. The chain is Variant surface glycoprotein YnAT 1.1 from Trypanosoma congolense.